The chain runs to 194 residues: Alkyl hydroperoxide reductase AhpD (194 aa).

C132 (proton donor) is an active-site residue. A disulfide bond links C132 and C135. C135 acts as the Cysteine sulfenic acid (-SOH) intermediate in catalysis.

This sequence belongs to the AhpD family.

It catalyses the reaction N(6)-[(R)-dihydrolipoyl]-L-lysyl-[lipoyl-carrier protein] + a hydroperoxide = N(6)-[(R)-lipoyl]-L-lysyl-[lipoyl-carrier protein] + an alcohol + H2O. Antioxidant protein with alkyl hydroperoxidase activity. Required for the reduction of the AhpC active site cysteine residues and for the regeneration of the AhpC enzyme activity. The polypeptide is Alkyl hydroperoxide reductase AhpD (Koribacter versatilis (strain Ellin345)).